A 365-amino-acid polypeptide reads, in one-letter code: Probable dual-specificity RNA methyltransferase RlmN (365 aa).

Catalysis depends on glutamate 99, which acts as the Proton acceptor. Positions 105 to 344 (QSYGLSVCVT…CVVRQEHGTD (240 aa)) constitute a Radical SAM core domain. Cysteine 112 and cysteine 349 are joined by a disulfide. Cysteine 119, cysteine 123, and cysteine 126 together coordinate [4Fe-4S] cluster. S-adenosyl-L-methionine is bound by residues 171–172 (GE), serine 203, 227–229 (SLH), and asparagine 305. The S-methylcysteine intermediate role is filled by cysteine 349.

The protein belongs to the radical SAM superfamily. RlmN family. It depends on [4Fe-4S] cluster as a cofactor.

It localises to the cytoplasm. It carries out the reaction adenosine(2503) in 23S rRNA + 2 reduced [2Fe-2S]-[ferredoxin] + 2 S-adenosyl-L-methionine = 2-methyladenosine(2503) in 23S rRNA + 5'-deoxyadenosine + L-methionine + 2 oxidized [2Fe-2S]-[ferredoxin] + S-adenosyl-L-homocysteine. The enzyme catalyses adenosine(37) in tRNA + 2 reduced [2Fe-2S]-[ferredoxin] + 2 S-adenosyl-L-methionine = 2-methyladenosine(37) in tRNA + 5'-deoxyadenosine + L-methionine + 2 oxidized [2Fe-2S]-[ferredoxin] + S-adenosyl-L-homocysteine. Specifically methylates position 2 of adenine 2503 in 23S rRNA and position 2 of adenine 37 in tRNAs. The sequence is that of Probable dual-specificity RNA methyltransferase RlmN from Lactococcus lactis subsp. cremoris (strain SK11).